The primary structure comprises 411 residues: LIM domain-binding protein 1 (411 aa).

Disordered stretches follow at residues 284-330 and 367-411; these read PPAE…TFAL and DAAN…QASQ. Over residues 302–318 the composition is skewed to low complexity; it reads SGGSTMSSGGGNTNNSN. Residues 336-375 enclose the LIM interaction domain (LID) domain; the sequence is DVMVVGEPTLMGGEFGDEDERLITRLENTQFDAANGIDDE.

Belongs to the LDB family. Forms homodimers and heterodimers. In terms of tissue distribution, first expressed at stages 15-16 in presumptive limb mesoderm. As limb outgrowth proceeds, expressed in the entire limb bud, concentrating in the distal mesoderm throughout limb development. Both hindlimbs and forelimbs exhibit similar expression patterns.

It is found in the nucleus. Binds to the LIM domain of a wide variety of LIM domain-containing transcription factors. The protein is LIM domain-binding protein 1 of Gallus gallus (Chicken).